Consider the following 285-residue polypeptide: 2,4-didehydro-3-deoxy-L-rhamnonate hydrolase (285 aa).

Pyruvate is bound at residue leucine 73. Mg(2+)-binding residues include glutamate 119, glutamate 121, and aspartate 150. Positions 168 and 238 each coordinate pyruvate.

This sequence belongs to the FAH family. In terms of assembly, homodimer. Mg(2+) is required as a cofactor.

It carries out the reaction 2,4-didehydro-3-deoxy-L-rhamnonate + H2O = (S)-lactate + pyruvate + H(+). It participates in carbohydrate degradation; L-rhamnose degradation. Its function is as follows. Hydrolase that catalyzes the hydrolysis of 2,4-didehydro-3-deoxy-L-rhamnonate to pyruvate and L-lactate. Can also hydrolyze L-2,4-diketo-3-deoxylyxonate and L-2,4-diketo-3-deoxymannonate. In vitro can also use acylpyruvates such as acetylpyruvate and trimethylacetopyruvate. Catalyzes the fifth (last) step in an alternative pathway for rhamnose utilization that does not involve phosphorylated intermediates. This chain is 2,4-didehydro-3-deoxy-L-rhamnonate hydrolase, found in Sphingomonas sp. (strain SKA58).